The chain runs to 67 residues: ATP synthase F(0) complex subunit 8 (67 aa).

A helical transmembrane segment spans residues 8–24; the sequence is TWFINIVSMILTLFIVF. An N6-acetyllysine; alternate modification is found at lysine 54. Position 54 is an N6-succinyllysine; alternate (lysine 54). Lysine 57 is modified (N6-acetyllysine).

This sequence belongs to the ATPase protein 8 family. In terms of assembly, component of the ATP synthase complex composed at least of ATP5F1A/subunit alpha, ATP5F1B/subunit beta, ATP5MC1/subunit c (homooctomer), MT-ATP6/subunit a, MT-ATP8/subunit 8, ATP5ME/subunit e, ATP5MF/subunit f, ATP5MG/subunit g, ATP5MK/subunit k, ATP5MJ/subunit j, ATP5F1C/subunit gamma, ATP5F1D/subunit delta, ATP5F1E/subunit epsilon, ATP5PF/subunit F6, ATP5PB/subunit b, ATP5PD/subunit d, ATP5PO/subunit OSCP. ATP synthase complex consists of a soluble F(1) head domain (subunits alpha(3) and beta(3)) - the catalytic core - and a membrane F(0) domain - the membrane proton channel (subunits c, a, 8, e, f, g, k and j). These two domains are linked by a central stalk (subunits gamma, delta, and epsilon) rotating inside the F1 region and a stationary peripheral stalk (subunits F6, b, d, and OSCP). Interacts with PRICKLE3.

It is found in the mitochondrion membrane. Subunit 8, of the mitochondrial membrane ATP synthase complex (F(1)F(0) ATP synthase or Complex V) that produces ATP from ADP in the presence of a proton gradient across the membrane which is generated by electron transport complexes of the respiratory chain. ATP synthase complex consist of a soluble F(1) head domain - the catalytic core - and a membrane F(1) domain - the membrane proton channel. These two domains are linked by a central stalk rotating inside the F(1) region and a stationary peripheral stalk. During catalysis, ATP synthesis in the catalytic domain of F(1) is coupled via a rotary mechanism of the central stalk subunits to proton translocation. In vivo, can only synthesize ATP although its ATP hydrolase activity can be activated artificially in vitro. Part of the complex F(0) domain. The sequence is that of ATP synthase F(0) complex subunit 8 from Equus caballus (Horse).